Here is a 120-residue protein sequence, read N- to C-terminus: NAD(P)H-quinone oxidoreductase subunit 3, chloroplastic (120 aa).

A run of 3 helical transmembrane segments spans residues 9–29 (IFWA…FLSG), 62–82 (YYMF…LYPW), and 88–108 (VLGV…IVGL).

The protein belongs to the complex I subunit 3 family. NDH is composed of at least 16 different subunits, 5 of which are encoded in the nucleus.

It localises to the plastid. The protein localises to the chloroplast thylakoid membrane. The catalysed reaction is a plastoquinone + NADH + (n+1) H(+)(in) = a plastoquinol + NAD(+) + n H(+)(out). It catalyses the reaction a plastoquinone + NADPH + (n+1) H(+)(in) = a plastoquinol + NADP(+) + n H(+)(out). Functionally, NDH shuttles electrons from NAD(P)H:plastoquinone, via FMN and iron-sulfur (Fe-S) centers, to quinones in the photosynthetic chain and possibly in a chloroplast respiratory chain. The immediate electron acceptor for the enzyme in this species is believed to be plastoquinone. Couples the redox reaction to proton translocation, and thus conserves the redox energy in a proton gradient. The protein is NAD(P)H-quinone oxidoreductase subunit 3, chloroplastic of Trachelium caeruleum (Blue throatwort).